The primary structure comprises 111 residues: Large ribosomal subunit protein uL23 (111 aa).

This sequence belongs to the universal ribosomal protein uL23 family. Part of the 50S ribosomal subunit. Contacts protein L29, and trigger factor when it is bound to the ribosome.

Its function is as follows. One of the early assembly proteins it binds 23S rRNA. One of the proteins that surrounds the polypeptide exit tunnel on the outside of the ribosome. Forms the main docking site for trigger factor binding to the ribosome. The polypeptide is Large ribosomal subunit protein uL23 (Chlamydia trachomatis serovar A (strain ATCC VR-571B / DSM 19440 / HAR-13)).